The sequence spans 135 residues: UPF0299 membrane protein PC1_1498 (135 aa).

Transmembrane regions (helical) follow at residues 5 to 25 (FIVCWQYLRAFALIYLCLLAG), 30 to 50 (ALLPFTIPGSIIGMLVLFTLL), 63 to 83 (GCHLLIRHMALLFVPIGVGVM), and 93 to 113 (FGPIVVSCLISTFIVMLVVGF).

Belongs to the UPF0299 family.

It localises to the cell inner membrane. The protein is UPF0299 membrane protein PC1_1498 of Pectobacterium carotovorum subsp. carotovorum (strain PC1).